The chain runs to 568 residues: Proline--tRNA ligase (568 aa).

Belongs to the class-II aminoacyl-tRNA synthetase family. ProS type 1 subfamily. In terms of assembly, homodimer.

It is found in the cytoplasm. The catalysed reaction is tRNA(Pro) + L-proline + ATP = L-prolyl-tRNA(Pro) + AMP + diphosphate. In terms of biological role, catalyzes the attachment of proline to tRNA(Pro) in a two-step reaction: proline is first activated by ATP to form Pro-AMP and then transferred to the acceptor end of tRNA(Pro). As ProRS can inadvertently accommodate and process non-cognate amino acids such as alanine and cysteine, to avoid such errors it has two additional distinct editing activities against alanine. One activity is designated as 'pretransfer' editing and involves the tRNA(Pro)-independent hydrolysis of activated Ala-AMP. The other activity is designated 'posttransfer' editing and involves deacylation of mischarged Ala-tRNA(Pro). The misacylated Cys-tRNA(Pro) is not edited by ProRS. This chain is Proline--tRNA ligase, found in Listeria monocytogenes serotype 4b (strain F2365).